Reading from the N-terminus, the 92-residue chain is Small ribosomal subunit protein uS19 (92 aa).

Belongs to the universal ribosomal protein uS19 family.

Its function is as follows. Protein S19 forms a complex with S13 that binds strongly to the 16S ribosomal RNA. In Shewanella halifaxensis (strain HAW-EB4), this protein is Small ribosomal subunit protein uS19.